A 456-amino-acid chain; its full sequence is Non-structural protein V (456 aa).

Residues 53 to 92 (SGESEQVEGGMSKDDGDVERRNLEDLSSTSPTDGTIGKRV) form a disordered region. Positions 63–76 (MSKDDGDVERRNLE) are enriched in basic and acidic residues. Residue Ser257 is modified to Phosphoserine; by host. Residues 265-324 (ISPEDEEPSSVGGKPNESIGRTIEGQSIRDNLQAKDNKSTDVPGAGPKDSAVKEEPPQKR) are disordered. Ser350 carries the post-translational modification Phosphoserine; by host. Zn(2+) contacts are provided by His408, Cys427, Cys431, Cys443, Cys445, Cys448, Cys452, and Cys455.

Belongs to the paramyxoviruses V protein family. In terms of assembly, interacts with host IFIH1/MDA5, DHX58/LGP2, STAT1 and STAT2. Interacts (via N-terminus) with host UBXN1 (via C-terminal UBX domain); this interaction inhibits interferon-alpha/beta (IFN-alpha/beta) production. Interacts with host RIGI regulatory protein (via CARDs domain) and host TRIM25 (via SPRY domain); these interactions prevent TRIM25-mediated ubiquitination of RIG-I and disrupts downstream RIG-I signaling.

The protein localises to the host cytoplasm. Functionally, plays an essential role in the inhibition of host immune response. Prevents the establishment of cellular antiviral state by blocking interferon-alpha/beta (IFN-alpha/beta) production and signaling pathway. Interacts with host IFIH1/MDA5 and DHX58/LGP2 to inhibit the transduction pathway involved in the activation of IFN-beta promoter, thus protecting the virus against cell antiviral state. Blocks the type I interferon signaling pathway by interacting with host STAT1 and STAT2 and thereby inhibiting their phosphorylation and subsequent nuclear translocation. Efficiently blocks the type II interferon signaling pathway. Suppresses interferon induction by interacting with and stabilizing host UBXN1, a negative regulator of both RIG-I-like receptors (RLR) and NF-kappa-B pathways. Blocks the type I interferon signaling pathway by disrupting the RIG-I signaling pathway. This chain is Non-structural protein V (P/V/C), found in Cynopterus brachyotis (Lesser short-nosed fruit bat).